The sequence spans 212 residues: Glycerol-3-phosphate acyltransferase (212 aa).

4 helical membrane passes run 3-23, 78-98, 115-135, and 155-177; these read ILLA…VVVS, DVAV…PVFF, AVHP…AFFF, and FLFG…LLVW.

It belongs to the PlsY family. In terms of assembly, probably interacts with PlsX.

It is found in the cell inner membrane. The enzyme catalyses an acyl phosphate + sn-glycerol 3-phosphate = a 1-acyl-sn-glycero-3-phosphate + phosphate. The protein operates within lipid metabolism; phospholipid metabolism. Catalyzes the transfer of an acyl group from acyl-phosphate (acyl-PO(4)) to glycerol-3-phosphate (G3P) to form lysophosphatidic acid (LPA). This enzyme utilizes acyl-phosphate as fatty acyl donor, but not acyl-CoA or acyl-ACP. The protein is Glycerol-3-phosphate acyltransferase of Burkholderia lata (strain ATCC 17760 / DSM 23089 / LMG 22485 / NCIMB 9086 / R18194 / 383).